Consider the following 248-residue polypeptide: Ubiquinone biosynthesis O-methyltransferase (248 aa).

4 residues coordinate S-adenosyl-L-methionine: R41, G72, D93, and M136.

The protein belongs to the methyltransferase superfamily. UbiG/COQ3 family.

The enzyme catalyses a 3-demethylubiquinol + S-adenosyl-L-methionine = a ubiquinol + S-adenosyl-L-homocysteine + H(+). It carries out the reaction a 3-(all-trans-polyprenyl)benzene-1,2-diol + S-adenosyl-L-methionine = a 2-methoxy-6-(all-trans-polyprenyl)phenol + S-adenosyl-L-homocysteine + H(+). It participates in cofactor biosynthesis; ubiquinone biosynthesis. In terms of biological role, O-methyltransferase that catalyzes the 2 O-methylation steps in the ubiquinone biosynthetic pathway. In Rhizobium etli (strain CIAT 652), this protein is Ubiquinone biosynthesis O-methyltransferase.